The chain runs to 860 residues: Alanine--tRNA ligase (860 aa).

Residues His-563, His-567, Cys-665, and His-669 each contribute to the Zn(2+) site.

This sequence belongs to the class-II aminoacyl-tRNA synthetase family. It depends on Zn(2+) as a cofactor.

Its subcellular location is the cytoplasm. The catalysed reaction is tRNA(Ala) + L-alanine + ATP = L-alanyl-tRNA(Ala) + AMP + diphosphate. In terms of biological role, catalyzes the attachment of alanine to tRNA(Ala) in a two-step reaction: alanine is first activated by ATP to form Ala-AMP and then transferred to the acceptor end of tRNA(Ala). Also edits incorrectly charged Ser-tRNA(Ala) and Gly-tRNA(Ala) via its editing domain. This is Alanine--tRNA ligase from Vibrio parahaemolyticus serotype O3:K6 (strain RIMD 2210633).